We begin with the raw amino-acid sequence, 429 residues long: UPF0053 protein YugS (429 aa).

A run of 4 helical transmembrane segments spans residues 1 to 21 (MLILQLIAIFVLIGITAVFVA), 61 to 81 (ACQLGITITALGLGWLGEPTF), 101 to 121 (IVTFVVAFIIVTFLHVVMGEL), and 133 to 153 (AVSLWIAKPLIWFYKITYPFI). The region spanning 1–201 (MLILQLIAIF…YEKGEINQSE (201 aa)) is the CNNM transmembrane domain. CBS domains are found at residues 220–281 (MIPR…PIKL) and 284–341 (IMRP…IRDE).

This sequence belongs to the UPF0053 family.

It localises to the cell membrane. This is UPF0053 protein YugS (yugS) from Bacillus subtilis (strain 168).